A 180-amino-acid chain; its full sequence is Small ribosomal subunit protein uS5 (180 aa).

One can recognise an S5 DRBM domain in the interval Met-24–Val-87.

This sequence belongs to the universal ribosomal protein uS5 family. Part of the 30S ribosomal subunit. Contacts proteins S4 and S8.

In terms of biological role, with S4 and S12 plays an important role in translational accuracy. Functionally, located at the back of the 30S subunit body where it stabilizes the conformation of the head with respect to the body. The protein is Small ribosomal subunit protein uS5 of Stenotrophomonas maltophilia (strain R551-3).